The primary structure comprises 227 residues: UPF0659 protein YMR090W (227 aa).

It belongs to the UPF0659 family.

Its subcellular location is the cytoplasm. This chain is UPF0659 protein YMR090W, found in Saccharomyces cerevisiae (strain ATCC 204508 / S288c) (Baker's yeast).